A 539-amino-acid polypeptide reads, in one-letter code: Glucose-6-phosphate isomerase (539 aa).

The Proton donor role is filled by Glu340. Active-site residues include His371 and Lys500.

The protein belongs to the GPI family.

Its subcellular location is the cytoplasm. It catalyses the reaction alpha-D-glucose 6-phosphate = beta-D-fructose 6-phosphate. It participates in carbohydrate biosynthesis; gluconeogenesis. It functions in the pathway carbohydrate degradation; glycolysis; D-glyceraldehyde 3-phosphate and glycerone phosphate from D-glucose: step 2/4. Catalyzes the reversible isomerization of glucose-6-phosphate to fructose-6-phosphate. This Ruegeria pomeroyi (strain ATCC 700808 / DSM 15171 / DSS-3) (Silicibacter pomeroyi) protein is Glucose-6-phosphate isomerase.